A 370-amino-acid polypeptide reads, in one-letter code: Actin-related protein 2/3 complex subunit 1A (370 aa).

WD repeat units lie at residues 6 to 45, 50 to 89, 140 to 179, 202 to 241, 244 to 284, and 322 to 365; these read FLLEPITCHAWNRDRTQIALSPNNHEVHIYKKNGGQWVKA, EHNGHITGIDWAPKSDRIVTCGADRNAYVWSQKDGVWKPT, PIRSTVLSLDWHPNNVLLAAGSCDFKCRVFSAYIKEVDEK, GTGGWVHGVSFSASGSRLAWVSHDSTVSVADASKSVQVST, TEFL…TFVS, and LHQN…SSIQ.

Belongs to the WD repeat ARPC1 family. In terms of assembly, probable component of the Arp2/3 complex in which it may replace ARPC1B.

The protein resides in the cytoplasm. It localises to the cytoskeleton. It is found in the nucleus. Its function is as follows. Probably functions as a component of the Arp2/3 complex which is involved in regulation of actin polymerization and together with an activating nucleation-promoting factor (NPF) mediates the formation of branched actin networks. In addition to its role in the cytoplasmic cytoskeleton, the Arp2/3 complex also promotes actin polymerization in the nucleus, thereby regulating gene transcription and repair of damaged DNA. This is Actin-related protein 2/3 complex subunit 1A (ARPC1A) from Bos taurus (Bovine).